A 472-amino-acid polypeptide reads, in one-letter code: L-fuculokinase (472 aa).

The protein belongs to the FGGY kinase family. The cofactor is a divalent metal cation.

It catalyses the reaction L-fuculose + ATP = L-fuculose 1-phosphate + ADP + H(+). The protein operates within carbohydrate degradation; L-fucose degradation; L-lactaldehyde and glycerone phosphate from L-fucose: step 2/3. Functionally, catalyzes the phosphorylation of L-fuculose. Can also phosphorylate, with lower efficiency, D-ribulose, D-xylulose and D-fructose. The polypeptide is L-fuculokinase (Escherichia coli (strain K12)).